Consider the following 388-residue polypeptide: Homeobox protein Hox-A13 (388 aa).

The homeobox DNA-binding region spans 322–381 (GRKKRVPYTKVQLKELEREYATNKFITKDKRRRISATTNLSERQVTIWFQNRRVKEKKVI).

It belongs to the Abd-B homeobox family. Binds DNA as a homodimer. Interacts with MEIS1, MEIS2 and MEIS3.

Its subcellular location is the nucleus. Functionally, sequence-specific, AT-rich binding transcription factor which is part of a developmental regulatory system that provides cells with specific positional identities on the anterior-posterior axis. In terms of biological role, sequence-specific transcription factor which is part of a developmental regulatory system that provides cells with specific positional identities on the anterior-posterior axis. The sequence is that of Homeobox protein Hox-A13 (HOXA13) from Homo sapiens (Human).